The chain runs to 621 residues: Acetolactate synthase (621 aa).

A compositionally biased stretch (low complexity) spans 1 to 19; sequence MSAPTRRPAPDAPGAAGIA. The segment at 1-39 is disordered; it reads MSAPTRRPAPDAPGAAGIAPAPPAPAAKPAAGKPKRIGP. Position 89 (Glu-89) interacts with thiamine diphosphate. FAD contacts are provided by residues Arg-190, 296 to 317, and 339 to 358; these read HGTV…LGTR and DIDP…IVGD. The tract at residues 432-512 is thiamine pyrophosphate binding; it reads HDQMWAAQFI…IKVALINNGN (81 aa). Mg(2+) is bound by residues Asp-483 and Asn-510.

Belongs to the TPP enzyme family. Mg(2+) serves as cofactor. Thiamine diphosphate is required as a cofactor.

It catalyses the reaction 2 pyruvate + H(+) = (2S)-2-acetolactate + CO2. The protein operates within amino-acid biosynthesis; L-isoleucine biosynthesis; L-isoleucine from 2-oxobutanoate: step 1/4. It participates in amino-acid biosynthesis; L-valine biosynthesis; L-valine from pyruvate: step 1/4. This chain is Acetolactate synthase (ilvB), found in Mycobacterium avium.